The sequence spans 117 residues: Large ribosomal subunit protein bL20 (117 aa).

The protein belongs to the bacterial ribosomal protein bL20 family.

Functionally, binds directly to 23S ribosomal RNA and is necessary for the in vitro assembly process of the 50S ribosomal subunit. It is not involved in the protein synthesizing functions of that subunit. The polypeptide is Large ribosomal subunit protein bL20 (Campylobacter lari (strain RM2100 / D67 / ATCC BAA-1060)).